The following is a 161-amino-acid chain: 2-C-methyl-D-erythritol 2,4-cyclodiphosphate synthase (161 aa).

Residues Asp9 and His11 each contribute to the a divalent metal cation site. 4-CDP-2-C-methyl-D-erythritol 2-phosphate is bound by residues 9-11 (DFH) and 37-38 (HS). His45 is a binding site for a divalent metal cation. Residues 59-61 (DIG), 64-68 (FPDTD), 135-138 (TTTE), and Arg145 contribute to the 4-CDP-2-C-methyl-D-erythritol 2-phosphate site.

This sequence belongs to the IspF family. As to quaternary structure, homotrimer. The cofactor is a divalent metal cation.

The enzyme catalyses 4-CDP-2-C-methyl-D-erythritol 2-phosphate = 2-C-methyl-D-erythritol 2,4-cyclic diphosphate + CMP. It functions in the pathway isoprenoid biosynthesis; isopentenyl diphosphate biosynthesis via DXP pathway; isopentenyl diphosphate from 1-deoxy-D-xylulose 5-phosphate: step 4/6. In terms of biological role, involved in the biosynthesis of isopentenyl diphosphate (IPP) and dimethylallyl diphosphate (DMAPP), two major building blocks of isoprenoid compounds. Catalyzes the conversion of 4-diphosphocytidyl-2-C-methyl-D-erythritol 2-phosphate (CDP-ME2P) to 2-C-methyl-D-erythritol 2,4-cyclodiphosphate (ME-CPP) with a corresponding release of cytidine 5-monophosphate (CMP). This Leptospira interrogans serogroup Icterohaemorrhagiae serovar copenhageni (strain Fiocruz L1-130) protein is 2-C-methyl-D-erythritol 2,4-cyclodiphosphate synthase.